A 221-amino-acid polypeptide reads, in one-letter code: Ribosomal RNA large subunit methyltransferase E (221 aa).

S-adenosyl-L-methionine-binding residues include G60, W62, D89, D105, and D134. K174 functions as the Proton acceptor in the catalytic mechanism.

This sequence belongs to the class I-like SAM-binding methyltransferase superfamily. RNA methyltransferase RlmE family.

It localises to the cytoplasm. The catalysed reaction is uridine(2552) in 23S rRNA + S-adenosyl-L-methionine = 2'-O-methyluridine(2552) in 23S rRNA + S-adenosyl-L-homocysteine + H(+). Its function is as follows. Specifically methylates the uridine in position 2552 of 23S rRNA at the 2'-O position of the ribose in the fully assembled 50S ribosomal subunit. This Cupriavidus metallidurans (strain ATCC 43123 / DSM 2839 / NBRC 102507 / CH34) (Ralstonia metallidurans) protein is Ribosomal RNA large subunit methyltransferase E.